The sequence spans 479 residues: Type I inositol polyphosphate 5-phosphatase 8 (479 aa).

2 catalytic regions span residues 300-315 and 379-394; these read DKVI…LRAS and KRRT…WKGD.

This sequence belongs to the inositol polyphosphate 5-phosphatase family.

The sequence is that of Type I inositol polyphosphate 5-phosphatase 8 from Arabidopsis thaliana (Mouse-ear cress).